A 379-amino-acid chain; its full sequence is Cytochrome b (379 aa).

The next 4 membrane-spanning stretches (helical) occupy residues 33–53, 77–98, 113–133, and 178–198; these read FGSLLGVCLMIQILTGLFLAM, WLIRYLHANGASMFFICLFIHV, WNIGIILFLTTMATAFVGYVL, and FFAFHFILPFIITAFALVHLL. Heme b-binding residues include His83 and His97. Residues His182 and His196 each contribute to the heme b site. His201 provides a ligand contact to a ubiquinone. 4 consecutive transmembrane segments (helical) span residues 226–246, 288–308, 320–340, and 347–367; these read IKDLLGILLLLLALMILALFF, LGGVLALILSILILAAFPLLN, ITQTIYWTLIVNLLVLTWIGG, and FTTIGQIASITYFTTIIILMP.

This sequence belongs to the cytochrome b family. As to quaternary structure, the cytochrome bc1 complex contains 11 subunits: 3 respiratory subunits (MT-CYB, CYC1 and UQCRFS1), 2 core proteins (UQCRC1 and UQCRC2) and 6 low-molecular weight proteins (UQCRH/QCR6, UQCRB/QCR7, UQCRQ/QCR8, UQCR10/QCR9, UQCR11/QCR10 and a cleavage product of UQCRFS1). This cytochrome bc1 complex then forms a dimer. Heme b serves as cofactor.

It localises to the mitochondrion inner membrane. In terms of biological role, component of the ubiquinol-cytochrome c reductase complex (complex III or cytochrome b-c1 complex) that is part of the mitochondrial respiratory chain. The b-c1 complex mediates electron transfer from ubiquinol to cytochrome c. Contributes to the generation of a proton gradient across the mitochondrial membrane that is then used for ATP synthesis. The chain is Cytochrome b (MT-CYB) from Akodon aerosus (Highland grass mouse).